We begin with the raw amino-acid sequence, 301 residues long: GTPase Era (301 aa).

An Era-type G domain is found at 7 to 175 (YCGFIAIVGR…AGIVRKHLPE (169 aa)). The interval 15-22 (GRPNVGKS) is G1. 15-22 (GRPNVGKS) lines the GTP pocket. Residues 41–45 (QTTRH) are G2. A G3 region spans residues 62–65 (DTPG). Residues 62–66 (DTPGL) and 124–127 (NKVD) contribute to the GTP site. The tract at residues 124–127 (NKVD) is G4. A G5 region spans residues 154–156 (ISA). One can recognise a KH type-2 domain in the interval 206 to 283 (LGAELPYSVT…HLELWVKVKS (78 aa)).

Belongs to the TRAFAC class TrmE-Era-EngA-EngB-Septin-like GTPase superfamily. Era GTPase family. Monomer.

The protein localises to the cytoplasm. It is found in the cell inner membrane. Functionally, an essential GTPase that binds both GDP and GTP, with rapid nucleotide exchange. Plays a role in 16S rRNA processing and 30S ribosomal subunit biogenesis and possibly also in cell cycle regulation and energy metabolism. The protein is GTPase Era of Salmonella paratyphi B (strain ATCC BAA-1250 / SPB7).